Reading from the N-terminus, the 571-residue chain is Quinone-dependent D-lactate dehydrogenase (571 aa).

The region spanning 44-273 is the FAD-binding PCMH-type domain; the sequence is GGGPVFAVVR…FAVRTRTFPR (230 aa). FAD contacts are provided by residues 78-82, 86-87, G145, S152, G162, and V263; these read ASNTG and GS.

This sequence belongs to the quinone-dependent D-lactate dehydrogenase family. It depends on FAD as a cofactor.

The protein localises to the cell membrane. The enzyme catalyses (R)-lactate + a quinone = a quinol + pyruvate. Catalyzes the oxidation of D-lactate to pyruvate. Also has weak activity with L-lactate and DL-2-hydroxybutyrate. Electrons derived from D-lactate oxidation enter the electron transport chain. Essential for growth with D-lactate as sole carbon and energy source. The polypeptide is Quinone-dependent D-lactate dehydrogenase (Corynebacterium glutamicum (strain ATCC 13032 / DSM 20300 / JCM 1318 / BCRC 11384 / CCUG 27702 / LMG 3730 / NBRC 12168 / NCIMB 10025 / NRRL B-2784 / 534)).